The primary structure comprises 100 residues: Urease subunit gamma (100 aa).

The protein belongs to the urease gamma subunit family. In terms of assembly, heterotrimer of UreA (gamma), UreB (beta) and UreC (alpha) subunits. Three heterotrimers associate to form the active enzyme.

The protein resides in the cytoplasm. The enzyme catalyses urea + 2 H2O + H(+) = hydrogencarbonate + 2 NH4(+). Its pathway is nitrogen metabolism; urea degradation; CO(2) and NH(3) from urea (urease route): step 1/1. This chain is Urease subunit gamma, found in Paracidovorax citrulli (strain AAC00-1) (Acidovorax citrulli).